Consider the following 241-residue polypeptide: 1-(5-phosphoribosyl)-5-[(5-phosphoribosylamino)methylideneamino] imidazole-4-carboxamide isomerase (241 aa).

D8 (proton acceptor) is an active-site residue. The active-site Proton donor is the D129.

It belongs to the HisA/HisF family.

The protein resides in the cytoplasm. The enzyme catalyses 1-(5-phospho-beta-D-ribosyl)-5-[(5-phospho-beta-D-ribosylamino)methylideneamino]imidazole-4-carboxamide = 5-[(5-phospho-1-deoxy-D-ribulos-1-ylimino)methylamino]-1-(5-phospho-beta-D-ribosyl)imidazole-4-carboxamide. Its pathway is amino-acid biosynthesis; L-histidine biosynthesis; L-histidine from 5-phospho-alpha-D-ribose 1-diphosphate: step 4/9. The sequence is that of 1-(5-phosphoribosyl)-5-[(5-phosphoribosylamino)methylideneamino] imidazole-4-carboxamide isomerase from Chloroflexus aggregans (strain MD-66 / DSM 9485).